The sequence spans 113 residues: Cholecystoxin (113 aa).

Residues 1 to 20 form the signal peptide; that stretch reads MYGGICLCVLLAVLAISSSG. Positions 21 to 79 are excised as a propeptide; sequence QHISRSLNGNSLAAAIEQNFPEKHRPARTPDSNQRVESNIDEKANLGVLLARYLQKARR. Residues 77-97 are disordered; the sequence is ARRGTNGKPPDPKKESQDYLG. Position 95 is a sulfotyrosine (Tyr-95). Phe-101 bears the Phenylalanine amide mark. Residues 102-113 constitute a propeptide that is removed on maturation; that stretch reads GRRSAEEYEYSS.

It belongs to the gastrin/cholecystokinin family. In terms of tissue distribution, expressed by the mandibular venom gland.

It is found in the secreted. Cholecystokinin-22: hypotensive neuropeptide that binds cholecystokinin receptor type A receptor (CCKAR). Functionally, cholecystokinin-8: hypotensive neuropeptide that binds cholecystokinin receptor type A receptor (CCKAR). The protein is Cholecystoxin of Varanus varius (Lace monitor lizard).